We begin with the raw amino-acid sequence, 462 residues long: 2-(3-amino-3-carboxypropyl)histidine synthase subunit 1 (462 aa).

Residues 1–87 form a disordered region; the sequence is MEEDRRQTDL…AVATAKPRRA (87 aa). A compositionally biased stretch (polar residues) spans 35–44; sequence ESAAQTQNGA. [4Fe-4S] cluster-binding residues include Cys173, Cys276, and Cys406.

The protein belongs to the DPH1/DPH2 family. DPH1 subfamily. As to quaternary structure, component of the 2-(3-amino-3-carboxypropyl)histidine synthase complex composed of DPH1, DPH2, DPH3 and a NADH-dependent reductase, predominantly CBR1. [4Fe-4S] cluster serves as cofactor.

The protein resides in the cytoplasm. The enzyme catalyses L-histidyl-[translation elongation factor 2] + S-adenosyl-L-methionine = 2-[(3S)-amino-3-carboxypropyl]-L-histidyl-[translation elongation factor 2] + S-methyl-5'-thioadenosine + H(+). Its pathway is protein modification; peptidyl-diphthamide biosynthesis. Functionally, catalyzes the first step of diphthamide biosynthesis, a post-translational modification of histidine which occurs in elongation factor 2. DPH1 and DPH2 transfer a 3-amino-3-carboxypropyl (ACP) group from S-adenosyl-L-methionine (SAM) to a histidine residue, the reaction is assisted by a reduction system comprising DPH3 and a NADH-dependent reductase, predominantly CBR1. The chain is 2-(3-amino-3-carboxypropyl)histidine synthase subunit 1 (DPH1) from Gibberella zeae (strain ATCC MYA-4620 / CBS 123657 / FGSC 9075 / NRRL 31084 / PH-1) (Wheat head blight fungus).